The following is a 669-amino-acid chain: Galactocerebrosidase (669 aa).

The first 26 residues, 1-26 (MTAAAGSAGHAAVPLLLCALLVPGGA), serve as a signal peptide directing secretion. Residues T93, W135, and N181 each coordinate substrate. E182 functions as the Proton donor/acceptor in the catalytic mechanism. The active-site Nucleophile is the E258. The cysteines at positions 271 and 378 are disulfide-linked. N-linked (GlcNAc...) asparagine glycosylation is present at N363. R380 lines the substrate pocket. N387, N543, and N586 each carry an N-linked (GlcNAc...) asparagine glycan.

Belongs to the glycosyl hydrolase 59 family.

The protein resides in the lysosome. The enzyme catalyses a beta-D-galactosyl-(1&lt;-&gt;1')-N-acylsphing-4-enine + H2O = an N-acylsphing-4-enine + D-galactose. It catalyses the reaction beta-D-galactosyl-(1&lt;-&gt;1)-sphing-4-enine + H2O = sphing-4-enine + D-galactose. It carries out the reaction a D-galactosylceramide + H2O = an N-acyl-sphingoid base + D-galactose. Functionally, hydrolyzes the galactose ester bonds of glycolipids such as galactosylceramide and galactosylsphingosine. Enzyme with very low activity responsible for the lysosomal catabolism of galactosylceramide, a major lipid in myelin, kidney and epithelial cells of small intestine and colon. This Canis lupus familiaris (Dog) protein is Galactocerebrosidase.